The sequence spans 489 residues: 3-octaprenyl-4-hydroxybenzoate carboxy-lyase (489 aa).

Asparagine 172 is a binding site for Mn(2+). Prenylated FMN is bound by residues 175-177, 189-191, and 194-195; these read VYR, RWL, and RG. Glutamate 240 serves as a coordination point for Mn(2+). Aspartate 288 serves as the catalytic Proton donor.

This sequence belongs to the UbiD family. Homohexamer. Requires prenylated FMN as cofactor. Mn(2+) serves as cofactor.

It is found in the cell membrane. The catalysed reaction is a 4-hydroxy-3-(all-trans-polyprenyl)benzoate + H(+) = a 2-(all-trans-polyprenyl)phenol + CO2. Its pathway is cofactor biosynthesis; ubiquinone biosynthesis. Functionally, catalyzes the decarboxylation of 3-octaprenyl-4-hydroxy benzoate to 2-octaprenylphenol, an intermediate step in ubiquinone biosynthesis. The protein is 3-octaprenyl-4-hydroxybenzoate carboxy-lyase of Wigglesworthia glossinidia brevipalpis.